A 479-amino-acid chain; its full sequence is Small ribosomal subunit protein bS1 (479 aa).

4 S1 motif domains span residues 36–105, 123–188, 209–277, and 294–363; these read GDIV…LSKK, DEAV…LSRR, GAIR…LSLK, and GQIV…LSLK. Residues 429–466 form a disordered region; that stretch reads TAQMEKFAAAEAEAANAPVSNGSSRSEESSGGTLASDA. Over residues 437-460 the composition is skewed to low complexity; it reads AAEAEAANAPVSNGSSRSEESSGG.

Belongs to the bacterial ribosomal protein bS1 family. As to quaternary structure, binds uncharacterized protein MSMEG_2731/MSMEI_2664.

Binds mRNA, facilitating recognition of most mRNAs by the 30S ribosomal subunit during translation initiation. Plays a role in trans-translation; binds tmRNA (the product of the ssrA gene). Binds very poorly to pyrazinoic acid (POA), the active form of the prodrug pyrazinamide (PZA); POA does not disrupt trans-translation in this organism. M.smegmatis is resistant to the antibiotic PZA. In trans-translation Ala-aminoacylated transfer-messenger RNA (tmRNA, product of the ssrA gene; the 2 termini fold to resemble tRNA(Ala) while it encodes a short internal open reading frame (the tag peptide)) acts like a tRNA, entering the A-site of the ribosome and displacing the stalled mRNA (which is subsequently degraded). The ribosome then switches to translate the ORF on the tmRNA, the nascent peptide is terminated with the 'tag peptide' encoded by the tmRNA and thus targeted for degradation. The chain is Small ribosomal subunit protein bS1 (rpsA) from Mycolicibacterium smegmatis (strain ATCC 700084 / mc(2)155) (Mycobacterium smegmatis).